A 120-amino-acid chain; its full sequence is Large ribosomal subunit protein bL17 (120 aa).

This sequence belongs to the bacterial ribosomal protein bL17 family. As to quaternary structure, part of the 50S ribosomal subunit. Contacts protein L32.

The chain is Large ribosomal subunit protein bL17 from Mesomycoplasma hyopneumoniae (strain 7448) (Mycoplasma hyopneumoniae).